The sequence spans 1159 residues: Syntaxin-binding protein 5-like (1159 aa).

The tract at residues Met1–Thr37 is disordered. Positions Cys25 to Thr37 are enriched in low complexity. 10 WD repeats span residues Thr67 to Gln108, Val115 to Phe154, Ile159 to Ile195, His214 to Ile248, Ile254 to Pro286, Pro307 to Thr350, Ile358 to Leu392, Thr414 to Lys491, Gln519 to Val628, and Thr642 to Gly703. 2 disordered regions span residues Ser571–Asp604 and Leu690–Ser770. Composition is skewed to polar residues over residues Gln699–Ser713 and Ser721–Cys739. WD repeat units lie at residues Val808–Val865, Arg874–Leu946, Ile951–Ser995, and Cys1009–Gln1032. Residues Gly1094–Lys1154 form the v-SNARE coiled-coil homology domain.

It belongs to the WD repeat L(2)GL family.

It is found in the cytoplasm. The protein resides in the cell membrane. It localises to the membrane. Its function is as follows. May play a role in vesicle trafficking and exocytosis. This is Syntaxin-binding protein 5-like (stxbp5l) from Danio rerio (Zebrafish).